The sequence spans 1088 residues: Exportin-T (1088 aa).

Low complexity predominate over residues 435–503; sequence KNNNNKNKNT…VKNANNIKNN (69 aa). Disordered regions lie at residues 435–513 and 1059–1088; these read KNNN…DDDD and LNNNNNINNNNNNINNNGHTNGNGVNKNGH.

The protein belongs to the exportin family.

It is found in the nucleus. It localises to the cytoplasm. Mediates the nuclear export of aminoacylated tRNAs. The protein is Exportin-T (xpot) of Dictyostelium discoideum (Social amoeba).